A 262-amino-acid chain; its full sequence is MNDILAKILAVKAEEVATARQMRSEAELLREAQARQDVRGFAQAIEDKISQGKAGVIAEIKKASPSKGVLRENFDPAEIAASYAMHGAACLSVLTDVQFFQGSHDNLRRARAACSLPVLRKDFIIDPYQIISARAMGADCVLLIVATLAPAQLRDLETLAIDLGMDVLVEVHDAKELDAALALRTPLIGINNRNLRTFETTLQTTLDLLPMIPAGKRVVTESGILKPEDVRLMREHDVQAFLVGEAFMRANDPGVELARLVA.

This sequence belongs to the TrpC family.

The catalysed reaction is 1-(2-carboxyphenylamino)-1-deoxy-D-ribulose 5-phosphate + H(+) = (1S,2R)-1-C-(indol-3-yl)glycerol 3-phosphate + CO2 + H2O. Its pathway is amino-acid biosynthesis; L-tryptophan biosynthesis; L-tryptophan from chorismate: step 4/5. This chain is Indole-3-glycerol phosphate synthase, found in Bordetella pertussis (strain Tohama I / ATCC BAA-589 / NCTC 13251).